Consider the following 276-residue polypeptide: NADPH-dependent 7-cyano-7-deazaguanine reductase (276 aa).

Position 83 to 85 (83 to 85 (IES)) interacts with substrate. NADPH is bound at residue 85-86 (SK). Cysteine 184 (thioimide intermediate) is an active-site residue. Aspartate 191 serves as the catalytic Proton donor. 223–224 (HE) contacts substrate. Position 252-253 (252-253 (RG)) interacts with NADPH.

It belongs to the GTP cyclohydrolase I family. QueF type 2 subfamily. As to quaternary structure, homodimer.

It localises to the cytoplasm. The enzyme catalyses 7-aminomethyl-7-carbaguanine + 2 NADP(+) = 7-cyano-7-deazaguanine + 2 NADPH + 3 H(+). It participates in tRNA modification; tRNA-queuosine biosynthesis. Its function is as follows. Catalyzes the NADPH-dependent reduction of 7-cyano-7-deazaguanine (preQ0) to 7-aminomethyl-7-deazaguanine (preQ1). This Pseudomonas fluorescens (strain ATCC BAA-477 / NRRL B-23932 / Pf-5) protein is NADPH-dependent 7-cyano-7-deazaguanine reductase.